A 335-amino-acid polypeptide reads, in one-letter code: Protein-arginine kinase (335 aa).

The Phosphagen kinase C-terminal domain maps to 21–244 (IVMSSRIRLA…NQIIHDEKQI (224 aa)). ATP contacts are provided by residues 24-28 (SSRIR), H82, R115, 166-170 (RASVM), and 197-202 (RGIYGE).

The protein belongs to the ATP:guanido phosphotransferase family.

The catalysed reaction is L-arginyl-[protein] + ATP = N(omega)-phospho-L-arginyl-[protein] + ADP + H(+). Its function is as follows. Catalyzes the specific phosphorylation of arginine residues in proteins. This chain is Protein-arginine kinase, found in Staphylococcus aureus (strain Mu3 / ATCC 700698).